A 420-amino-acid chain; its full sequence is Membrane protein UL43 homolog (420 aa).

A run of 11 helical transmembrane segments spans residues 58–78 (IFSIAAHLAITLSCITLIQFI), 81–101 (KIIYINCTIYAITGFLIAFIV), 114–134 (IGKPAQFIFALISSIADTLIT), 157–177 (LMCFVMLGAFIASYHYVCLAT), 181–201 (LTWKAGFLILTAGTIIGISAP), 203–223 (GNISSLFGFLFLYTILAINVV), 278–298 (QIPMVVMSHATGVLIPVVIAL), 312–332 (TDMLQGVCGVLVGASVSIFIP), 343–363 (IIILLSIIGAMAITLAGFGLV), 364–384 (LGPTLFSACAAALSCYTCINI), and 399–419 (VVKSILGFIITSLLVCILVAL).

It belongs to the alphaherpesvirinae HHV-1 UL43 family.

The protein resides in the host membrane. This Gallus gallus (Chicken) protein is Membrane protein UL43 homolog (MDV056).